The following is a 622-amino-acid chain: Low affinity potassium transport system protein Kup (622 aa).

A run of 12 helical transmembrane segments spans residues 9–29 (LPAV…TSPL), 49–69 (VFGF…LKYL), 101–121 (VLVI…VITP), 137–157 (PAMD…LFII), 165–185 (VGKL…VLGV), 212–232 (AVSF…EALY), 247–267 (WFTV…ALLL), 276–296 (PFFL…ATLA), 337–357 (IYIP…IVSF), 363–383 (LAAA…ILFC), 397–417 (AWVL…ANVV), and 419–439 (ILSG…IMTT).

This sequence belongs to the HAK/KUP transporter (TC 2.A.72) family.

The protein resides in the cell inner membrane. It catalyses the reaction K(+)(in) + H(+)(in) = K(+)(out) + H(+)(out). In terms of biological role, responsible for the low-affinity transport of potassium into the cell. Likely operates as a K(+):H(+) symporter. The polypeptide is Low affinity potassium transport system protein Kup (Pectobacterium atrosepticum (strain SCRI 1043 / ATCC BAA-672) (Erwinia carotovora subsp. atroseptica)).